Here is a 70-residue protein sequence, read N- to C-terminus: Adenylate kinase (70 aa).

10–15 (GAGKGT) contacts ATP. An NMP region spans residues 30–59 (STGDLFRANISKQTELGKLAKSYMDKGELV). Residues T31, R36, and 57-59 (ELV) each bind AMP.

It belongs to the adenylate kinase family. As to quaternary structure, monomer.

It is found in the cytoplasm. It carries out the reaction AMP + ATP = 2 ADP. Its pathway is purine metabolism; AMP biosynthesis via salvage pathway; AMP from ADP: step 1/1. Functionally, catalyzes the reversible transfer of the terminal phosphate group between ATP and AMP. Plays an important role in cellular energy homeostasis and in adenine nucleotide metabolism. The polypeptide is Adenylate kinase (adk) (Streptomyces scabiei).